The primary structure comprises 115 residues: NAD(P)H-quinone oxidoreductase subunit M (115 aa).

This sequence belongs to the complex I NdhM subunit family. NDH-1 can be composed of about 15 different subunits; different subcomplexes with different compositions have been identified which probably have different functions.

It localises to the cellular thylakoid membrane. It catalyses the reaction a plastoquinone + NADH + (n+1) H(+)(in) = a plastoquinol + NAD(+) + n H(+)(out). The catalysed reaction is a plastoquinone + NADPH + (n+1) H(+)(in) = a plastoquinol + NADP(+) + n H(+)(out). Its function is as follows. NDH-1 shuttles electrons from an unknown electron donor, via FMN and iron-sulfur (Fe-S) centers, to quinones in the respiratory and/or the photosynthetic chain. The immediate electron acceptor for the enzyme in this species is believed to be plastoquinone. Couples the redox reaction to proton translocation, and thus conserves the redox energy in a proton gradient. Cyanobacterial NDH-1 also plays a role in inorganic carbon-concentration. This chain is NAD(P)H-quinone oxidoreductase subunit M, found in Synechococcus sp. (strain CC9902).